Consider the following 70-residue polypeptide: Small ribosomal subunit protein bS21B (70 aa).

It belongs to the bacterial ribosomal protein bS21 family.

This is Small ribosomal subunit protein bS21B from Paraburkholderia xenovorans (strain LB400).